We begin with the raw amino-acid sequence, 350 residues long: Protein Wnt-2 (350 aa).

An N-terminal signal peptide occupies residues 1-25; sequence MNFLPNGICFYLSVAICWFSSRVDA. 11 disulfides stabilise this stretch: Cys74–Cys85, Cys125–Cys133, Cys135–Cys155, Cys204–Cys218, Cys206–Cys213, Cys276–Cys307, Cys292–Cys302, Cys306–Cys346, Cys322–Cys337, Cys324–Cys334, and Cys329–Cys330. Residue Asn132 is glycosylated (N-linked (GlcNAc...) asparagine). A lipid anchor (O-palmitoleoyl serine; by PORCN) is attached at Ser210. Residue Asn293 is glycosylated (N-linked (GlcNAc...) asparagine).

It belongs to the Wnt family. Palmitoleoylation is required for efficient binding to frizzled receptors. Depalmitoleoylation leads to Wnt signaling pathway inhibition.

It is found in the secreted. Its subcellular location is the extracellular space. It localises to the extracellular matrix. Its function is as follows. Ligand for members of the frizzled family of seven transmembrane receptors. Functions in the canonical Wnt signaling pathway that results in activation of transcription factors of the TCF/LEF family. This Danio rerio (Zebrafish) protein is Protein Wnt-2 (wnt2).